The following is a 395-amino-acid chain: Putative 8-amino-7-oxononanoate synthase (395 aa).

Arginine 23 provides a ligand contact to substrate. 110–111 is a pyridoxal 5'-phosphate binding site; sequence GY. Histidine 135 provides a ligand contact to substrate. Pyridoxal 5'-phosphate contacts are provided by residues serine 182, 207–210, and 239–242; these read DEAH and TFSK. Lysine 242 carries the N6-(pyridoxal phosphate)lysine modification. Threonine 356 is a substrate binding site.

The protein belongs to the class-II pyridoxal-phosphate-dependent aminotransferase family. BioF subfamily. In terms of assembly, homodimer. Pyridoxal 5'-phosphate serves as cofactor.

It carries out the reaction 6-carboxyhexanoyl-[ACP] + L-alanine + H(+) = (8S)-8-amino-7-oxononanoate + holo-[ACP] + CO2. It participates in cofactor biosynthesis; biotin biosynthesis. Functionally, catalyzes the decarboxylative condensation of pimeloyl-[acyl-carrier protein] and L-alanine to produce 8-amino-7-oxononanoate (AON), [acyl-carrier protein], and carbon dioxide. The chain is Putative 8-amino-7-oxononanoate synthase (bioF) from Bacillus cereus (strain ATCC 10987 / NRS 248).